The following is a 435-amino-acid chain: Estrogen-related receptor gamma (435 aa).

The segment at 1–64 is disordered; that stretch reads MSNKDRHIDS…GLDSPPLYPS (64 aa). Over residues 10 to 29 the composition is skewed to polar residues; that stretch reads SSCSSFIKTEPSSPASLTDS. Residues 34–47 show a composition bias toward low complexity; that stretch reads SPGGSSDASGSYSS. The segment at residues 102–177 is a DNA-binding region (nuclear receptor); sequence KRLCLVCGDI…VGMLKEGVRL (76 aa). NR C4-type zinc fingers lie at residues 105–125 and 141–160; these read CLVCGDIASGYHYGVASCEAC and CPATNECEITKRRRKSCQAC. Residues 210–434 enclose the NR LBD domain; sequence PYNKIVSHLL…KLFSEMLEAK (225 aa).

It belongs to the nuclear hormone receptor family. NR3 subfamily. As to quaternary structure, homodimer. Interacts with NRIP1, NCOA1 and NCOR2. Binds TLE1, PNRC1 and PNRC2. Binds GRIP1. In terms of processing, acetylated by PCAF/KAT2 (in vitro).

It is found in the nucleus. In terms of biological role, orphan receptor that acts as a transcription activator in the absence of bound ligand. Binds specifically to an estrogen response element and activates reporter genes controlled by estrogen response elements. Induces the expression of PERM1 in the skeletal muscle. The chain is Estrogen-related receptor gamma (ESRRG) from Pongo abelii (Sumatran orangutan).